Reading from the N-terminus, the 254-residue chain is Imidazole glycerol phosphate synthase subunit HisF (254 aa).

Catalysis depends on residues aspartate 11 and aspartate 130.

Belongs to the HisA/HisF family. In terms of assembly, heterodimer of HisH and HisF.

It is found in the cytoplasm. It carries out the reaction 5-[(5-phospho-1-deoxy-D-ribulos-1-ylimino)methylamino]-1-(5-phospho-beta-D-ribosyl)imidazole-4-carboxamide + L-glutamine = D-erythro-1-(imidazol-4-yl)glycerol 3-phosphate + 5-amino-1-(5-phospho-beta-D-ribosyl)imidazole-4-carboxamide + L-glutamate + H(+). Its pathway is amino-acid biosynthesis; L-histidine biosynthesis; L-histidine from 5-phospho-alpha-D-ribose 1-diphosphate: step 5/9. In terms of biological role, IGPS catalyzes the conversion of PRFAR and glutamine to IGP, AICAR and glutamate. The HisF subunit catalyzes the cyclization activity that produces IGP and AICAR from PRFAR using the ammonia provided by the HisH subunit. This chain is Imidazole glycerol phosphate synthase subunit HisF, found in Halorhodospira halophila (strain DSM 244 / SL1) (Ectothiorhodospira halophila (strain DSM 244 / SL1)).